Here is a 219-residue protein sequence, read N- to C-terminus: MRMRKKPWARPELEGCDFFVINPKEYKGKWKEFFGNDKPIYLELGCGKGTFMAVHASENPDINYIAIDIKDEVLGLAKRNIEKAYEEKNRKTDNVKLMAQEIGLISEILSEEDVVSRIYINFCNPWPKEKHKKRRLTHMRQLEQYKTFLKSEGEIYFKTDDDELFEESLEYFNEAGFRIKYITYDLHNSDVEGNVQTEHEKMFSEQGIKIKFLIAMKDN.

Glu-43, Asp-68, Glu-101, and Asn-124 together coordinate S-adenosyl-L-methionine. Substrate contacts are provided by Lys-128 and Asp-160.

This sequence belongs to the class I-like SAM-binding methyltransferase superfamily. TrmB family.

The enzyme catalyses guanosine(46) in tRNA + S-adenosyl-L-methionine = N(7)-methylguanosine(46) in tRNA + S-adenosyl-L-homocysteine. Its pathway is tRNA modification; N(7)-methylguanine-tRNA biosynthesis. Catalyzes the formation of N(7)-methylguanine at position 46 (m7G46) in tRNA. This is tRNA (guanine-N(7)-)-methyltransferase from Clostridium beijerinckii (strain ATCC 51743 / NCIMB 8052) (Clostridium acetobutylicum).